A 306-amino-acid chain; its full sequence is UDP-3-O-acyl-N-acetylglucosamine deacetylase (306 aa).

Residues H79, H238, and D242 each contribute to the Zn(2+) site. Residue H265 is the Proton donor of the active site.

The protein belongs to the LpxC family. Zn(2+) serves as cofactor.

The catalysed reaction is a UDP-3-O-[(3R)-3-hydroxyacyl]-N-acetyl-alpha-D-glucosamine + H2O = a UDP-3-O-[(3R)-3-hydroxyacyl]-alpha-D-glucosamine + acetate. Its pathway is glycolipid biosynthesis; lipid IV(A) biosynthesis; lipid IV(A) from (3R)-3-hydroxytetradecanoyl-[acyl-carrier-protein] and UDP-N-acetyl-alpha-D-glucosamine: step 2/6. Its function is as follows. Catalyzes the hydrolysis of UDP-3-O-myristoyl-N-acetylglucosamine to form UDP-3-O-myristoylglucosamine and acetate, the committed step in lipid A biosynthesis. The sequence is that of UDP-3-O-acyl-N-acetylglucosamine deacetylase from Shewanella loihica (strain ATCC BAA-1088 / PV-4).